The following is a 275-amino-acid chain: NH(3)-dependent NAD(+) synthetase (275 aa).

Position 50 to 57 (50 to 57) interacts with ATP; sequence GISGGVDS. Aspartate 56 provides a ligand contact to Mg(2+). A deamido-NAD(+)-binding site is contributed by arginine 147. Threonine 167 serves as a coordination point for ATP. Mg(2+) is bound at residue glutamate 172. 2 residues coordinate deamido-NAD(+): lysine 180 and aspartate 187. Residues lysine 196 and threonine 218 each coordinate ATP. 267 to 268 is a deamido-NAD(+) binding site; it reads HK.

It belongs to the NAD synthetase family. As to quaternary structure, homodimer.

It carries out the reaction deamido-NAD(+) + NH4(+) + ATP = AMP + diphosphate + NAD(+) + H(+). The protein operates within cofactor biosynthesis; NAD(+) biosynthesis; NAD(+) from deamido-NAD(+) (ammonia route): step 1/1. In terms of biological role, catalyzes the ATP-dependent amidation of deamido-NAD to form NAD. Uses ammonia as a nitrogen source. The polypeptide is NH(3)-dependent NAD(+) synthetase (Pseudomonas aeruginosa (strain LESB58)).